The following is a 236-amino-acid chain: MRKQFLIAYRGYSSIAPENTKLAFQAAQVFDFDGIWIDIQLTKDKQIVVTHKENFKVSNKNLNLNQINLVDLKKVNLASEFKLKVTSQQIQTLKEVLTQFIQPFKYLLIHIKDDKENNNSLLEQLNLLCKDFVLAKEKMILLSSNFHIIKLINETFKGFKTGFVIANKKALLVASRDELMRYCRFLVPNESFYHKNCKEIQNLGLPVILWVIKGLLRYQFYENDRFVKFQITAQIY.

The 233-residue stretch at 4–236 folds into the GP-PDE domain; sequence QFLIAYRGYS…VKFQITAQIY (233 aa).

The protein to glycerophosphoryl diester phosphodiesterases (EC 3.1.4.46). This sequence to M.genitalium MG293.

This is an uncharacterized protein from Mycoplasma genitalium (strain ATCC 33530 / DSM 19775 / NCTC 10195 / G37) (Mycoplasmoides genitalium).